Reading from the N-terminus, the 561-residue chain is Urocanate hydratase (561 aa).

NAD(+) contacts are provided by residues 52 to 53 (GG), Gln-130, 176 to 178 (GMG), Glu-196, Arg-201, 242 to 243 (NA), 263 to 267 (QTSAH), 273 to 274 (YL), and Tyr-322. Cys-410 is a catalytic residue. Gly-492 is a binding site for NAD(+).

Belongs to the urocanase family. It depends on NAD(+) as a cofactor.

It localises to the cytoplasm. It catalyses the reaction 4-imidazolone-5-propanoate = trans-urocanate + H2O. Its pathway is amino-acid degradation; L-histidine degradation into L-glutamate; N-formimidoyl-L-glutamate from L-histidine: step 2/3. Its function is as follows. Catalyzes the conversion of urocanate to 4-imidazolone-5-propionate. The polypeptide is Urocanate hydratase (Salmonella agona (strain SL483)).